We begin with the raw amino-acid sequence, 1025 residues long: Leucyl-cystinyl aminopeptidase (1025 aa).

Met-1 is subject to N-acetylmethionine. Residues 1-110 (MEPFTNDRLQ…GACSVPSART (110 aa)) lie on the Cytoplasmic side of the membrane. The short motif at 53-54 (LL) is the Dileucine internalization motif element. Residue Tyr-70 is modified to Phosphotyrosine. The Dileucine internalization motif motif lies at 76-77 (LL). 2 positions are modified to phosphoserine: Ser-80 and Ser-91. The interval 96-101 (RQSPDG) is tankyrase binding. Residues 111–131 (MVVCAFVIVVAVSVIMVIYLL) form a helical; Signal-anchor for type II membrane protein membrane-spanning segment. The Extracellular segment spans residues 132–1025 (PRCTFTKEGC…KNLKSLTWWL (894 aa)). Asn-145, Asn-184, Asn-215, Asn-256, and Asn-266 each carry an N-linked (GlcNAc...) asparagine glycan. Glu-295 is a substrate binding site. N-linked (GlcNAc...) asparagine glycans are attached at residues Asn-368 and Asn-374. 428-432 (GAMEN) contributes to the substrate binding site. Asn-448 carries N-linked (GlcNAc...) asparagine glycosylation. His-464 lines the Zn(2+) pocket. Catalysis depends on Glu-465, which acts as the Proton acceptor. Zn(2+) is bound by residues His-468 and Glu-487. N-linked (GlcNAc...) asparagine glycosylation is found at Asn-525, Asn-578, Asn-598, Asn-664, Asn-682, Asn-760, Asn-834, Asn-850, and Asn-989.

The protein belongs to the peptidase M1 family. Homodimer. Binds tankyrases 1 and 2. It depends on Zn(2+) as a cofactor. The pregnancy serum form is derived from the membrane-bound form by proteolytic processing. Post-translationally, N-glycosylated. In terms of tissue distribution, highly expressed in placenta, heart, kidney and small intestine. Detected at lower levels in neuronal cells in the brain, in skeletal muscle, spleen, liver, testes and colon.

Its subcellular location is the cell membrane. The protein localises to the secreted. The enzyme catalyses Release of an N-terminal amino acid, Cys-|-Xaa-, in which the half-cystine residue is involved in a disulfide loop, notably in oxytocin or vasopressin. Hydrolysis rates on a range of aminoacyl arylamides exceed that for the cystinyl derivative, however.. In terms of biological role, release of an N-terminal amino acid, cleaves before cysteine, leucine as well as other amino acids. Degrades peptide hormones such as oxytocin, vasopressin and angiotensin III, and plays a role in maintaining homeostasis during pregnancy. May be involved in the inactivation of neuronal peptides in the brain. Cleaves Met-enkephalin and dynorphin. Binds angiotensin IV and may be the angiotensin IV receptor in the brain. In Homo sapiens (Human), this protein is Leucyl-cystinyl aminopeptidase (LNPEP).